Here is a 307-residue protein sequence, read N- to C-terminus: MNAPTSVTVRVPAKVNLRLAVGPVRGDGYHGLVNVFHAVSLYDEVTVSPRSDLAPGQAVLSVDGERPDHVARVPLDDSNLAARAAALLARHVPHATGVHIHVHKAIPVAGGMAGGSADAAAALVACDALWEGGTPRERLLELAAELGSDVAFPLIGCTAVGTGRGEQLSPLPVQGTFHWVFALVDGGLSTTKVFAEYDRLRPDAPEPTLDDALVAALAAGDARRLGAALTNDLQPAALALRPELGDLLEAGRAAGALGALVSGSGPTCAFLAESADHARELAAALRASGTCADTVTAHGPVPGATVV.

Residue K14 is part of the active site. 107-117 is a binding site for ATP; that stretch reads PVAGGMAGGSA. The active site involves D149.

It belongs to the GHMP kinase family. IspE subfamily.

It catalyses the reaction 4-CDP-2-C-methyl-D-erythritol + ATP = 4-CDP-2-C-methyl-D-erythritol 2-phosphate + ADP + H(+). The protein operates within isoprenoid biosynthesis; isopentenyl diphosphate biosynthesis via DXP pathway; isopentenyl diphosphate from 1-deoxy-D-xylulose 5-phosphate: step 3/6. Functionally, catalyzes the phosphorylation of the position 2 hydroxy group of 4-diphosphocytidyl-2C-methyl-D-erythritol. This is 4-diphosphocytidyl-2-C-methyl-D-erythritol kinase from Thermobifida fusca (strain YX).